Here is a 644-residue protein sequence, read N- to C-terminus: Exoribonuclease 2 (644 aa).

The 328-residue stretch at 189–516 folds into the RNB domain; the sequence is RRDLTALNFV…NHRLLKAIVK (328 aa). The 83-residue stretch at 561–643 folds into the S1 motif domain; the sequence is DTRFAAEIID…ETRSIIARPV (83 aa).

The protein belongs to the RNR ribonuclease family. RNase II subfamily.

The protein localises to the cytoplasm. The enzyme catalyses Exonucleolytic cleavage in the 3'- to 5'-direction to yield nucleoside 5'-phosphates.. In terms of biological role, involved in mRNA degradation. Hydrolyzes single-stranded polyribonucleotides processively in the 3' to 5' direction. The polypeptide is Exoribonuclease 2 (Enterobacter sp. (strain 638)).